Reading from the N-terminus, the 441-residue chain is Proline--tRNA ligase (441 aa).

The protein belongs to the class-II aminoacyl-tRNA synthetase family. ProS type 2 subfamily. In terms of assembly, homodimer.

It is found in the cytoplasm. It carries out the reaction tRNA(Pro) + L-proline + ATP = L-prolyl-tRNA(Pro) + AMP + diphosphate. In terms of biological role, catalyzes the attachment of proline to tRNA(Pro) in a two-step reaction: proline is first activated by ATP to form Pro-AMP and then transferred to the acceptor end of tRNA(Pro). The sequence is that of Proline--tRNA ligase from Methylorubrum extorquens (strain PA1) (Methylobacterium extorquens).